We begin with the raw amino-acid sequence, 302 residues long: Nodulation protein D 3 (302 aa).

Residues 6–63 (LDLNLLVALDALMIERNLTAAARSINLSQPAMSAAVRRLRSYFRDELFTMRGREFVPT) enclose the HTH lysR-type domain. The H-T-H motif DNA-binding region spans 23-42 (LTAAARSINLSQPAMSAAVR).

Belongs to the LysR transcriptional regulatory family.

In terms of biological role, nodD regulates the expression of the nodABCFE genes which encode other nodulation proteins. NodD is also a negative regulator of its own expression. Binds flavonoids as inducers. This is Nodulation protein D 3 (nodD3) from Rhizobium leguminosarum bv. phaseoli.